A 417-amino-acid polypeptide reads, in one-letter code: Serine hydroxymethyltransferase 2 (417 aa).

(6S)-5,6,7,8-tetrahydrofolate contacts are provided by residues Leu-121 and 125-127; that span reads GHL. Lys-229 is subject to N6-(pyridoxal phosphate)lysine. 354–356 is a binding site for (6S)-5,6,7,8-tetrahydrofolate; it reads SPF.

This sequence belongs to the SHMT family. In terms of assembly, homodimer. Requires pyridoxal 5'-phosphate as cofactor.

It localises to the cytoplasm. It catalyses the reaction (6R)-5,10-methylene-5,6,7,8-tetrahydrofolate + glycine + H2O = (6S)-5,6,7,8-tetrahydrofolate + L-serine. It functions in the pathway one-carbon metabolism; tetrahydrofolate interconversion. It participates in amino-acid biosynthesis; glycine biosynthesis; glycine from L-serine: step 1/1. Its function is as follows. Catalyzes the reversible interconversion of serine and glycine with tetrahydrofolate (THF) serving as the one-carbon carrier. This reaction serves as the major source of one-carbon groups required for the biosynthesis of purines, thymidylate, methionine, and other important biomolecules. Also exhibits THF-independent aldolase activity toward beta-hydroxyamino acids, producing glycine and aldehydes, via a retro-aldol mechanism. The sequence is that of Serine hydroxymethyltransferase 2 from Pseudomonas putida (strain ATCC 47054 / DSM 6125 / CFBP 8728 / NCIMB 11950 / KT2440).